The sequence spans 517 residues: Acetylcholine receptor subunit delta (517 aa).

A signal peptide spans 1–21 (MEGPVLTLGLLAALAVCGSWG). Topologically, residues 22–245 (LNEEERLIRH…ITFYLIIRRK (224 aa)) are extracellular. N-linked (GlcNAc...) asparagine glycosylation is found at Asn97 and Asn164. Cys151 and Cys165 are oxidised to a cystine. 3 helical membrane passes run 246 to 270 (PLFYIINILVPCVLISFMVNLVFYL), 278 to 299 (TSVAISVLLAQSVFLLLISKRL), and 312 to 333 (FLLFGMVLVTMVVVICVIVLNI). At 334-471 (HFRTPSTHVL…WNRVARTVDR (138 aa)) the chain is on the cytoplasmic side. Position 390 is a phosphotyrosine; by Tyr-kinases (Tyr390). Residues 472–490 (LCLFVVTPVMVVGTAWIFL) form a helical membrane-spanning segment.

Belongs to the ligand-gated ion channel (TC 1.A.9) family. Acetylcholine receptor (TC 1.A.9.1) subfamily. Delta/CHRND sub-subfamily. Pentamer of two alpha chains, and one each of the beta, delta, and gamma (in immature muscle) or epsilon (in mature muscle) chains. The muscle heteropentamer composed of alpha-1, beta-1, delta, epsilon subunits interacts with the alpha-conotoxin ImII.

It localises to the postsynaptic cell membrane. The protein resides in the cell membrane. The catalysed reaction is K(+)(in) = K(+)(out). It catalyses the reaction Na(+)(in) = Na(+)(out). Its function is as follows. After binding acetylcholine, the AChR responds by an extensive change in conformation that affects all subunits and leads to opening of an ion-conducting channel across the plasma membrane. This Homo sapiens (Human) protein is Acetylcholine receptor subunit delta.